Reading from the N-terminus, the 37-residue chain is Large ribosomal subunit protein bL36 (37 aa).

This sequence belongs to the bacterial ribosomal protein bL36 family.

This chain is Large ribosomal subunit protein bL36, found in Marinobacter nauticus (strain ATCC 700491 / DSM 11845 / VT8) (Marinobacter aquaeolei).